A 356-amino-acid chain; its full sequence is 3-isopropylmalate dehydrogenase (356 aa).

R95, R105, R133, and D223 together coordinate substrate. Residues D223, D247, and D251 each coordinate Mg(2+). 281 to 293 (GSAPDIAGQNKAN) contacts NAD(+).

This sequence belongs to the isocitrate and isopropylmalate dehydrogenases family. LeuB type 1 subfamily. Homodimer. The cofactor is Mg(2+). Mn(2+) is required as a cofactor.

It localises to the cytoplasm. It catalyses the reaction (2R,3S)-3-isopropylmalate + NAD(+) = 4-methyl-2-oxopentanoate + CO2 + NADH. It functions in the pathway amino-acid biosynthesis; L-leucine biosynthesis; L-leucine from 3-methyl-2-oxobutanoate: step 3/4. Its function is as follows. Catalyzes the oxidation of 3-carboxy-2-hydroxy-4-methylpentanoate (3-isopropylmalate) to 3-carboxy-4-methyl-2-oxopentanoate. The product decarboxylates to 4-methyl-2 oxopentanoate. In Neisseria meningitidis serogroup B (strain ATCC BAA-335 / MC58), this protein is 3-isopropylmalate dehydrogenase.